The primary structure comprises 615 residues: Glutamine--fructose-6-phosphate aminotransferase [isomerizing] (615 aa).

The active-site Nucleophile; for GATase activity is Cys2. In terms of domain architecture, Glutamine amidotransferase type-2 spans 2-220 (CGIVGYVGPQ…QDQVVELRRD (219 aa)). SIS domains lie at 287-427 (IPPG…VRGT) and 460-605 (LARS…VDQP). Lys610 acts as the For Fru-6P isomerization activity in catalysis.

As to quaternary structure, homodimer.

It is found in the cytoplasm. The catalysed reaction is D-fructose 6-phosphate + L-glutamine = D-glucosamine 6-phosphate + L-glutamate. Catalyzes the first step in hexosamine metabolism, converting fructose-6P into glucosamine-6P using glutamine as a nitrogen source. This chain is Glutamine--fructose-6-phosphate aminotransferase [isomerizing], found in Streptomyces coelicolor (strain ATCC BAA-471 / A3(2) / M145).